We begin with the raw amino-acid sequence, 205 residues long: Gap junction epsilon-1 protein (205 aa).

Residues Met-1–Phe-23 lie on the Cytoplasmic side of the membrane. The helical transmembrane segment at His-24 to Tyr-44 threads the bilayer. Topologically, residues Gly-45–Ser-76 are extracellular. Intrachain disulfides connect Cys-53–Cys-161 and Cys-64–Cys-148. The helical transmembrane segment at Phe-77–Ala-97 threads the bilayer. Over Cys-98–Tyr-112 the chain is Cytoplasmic. Residues Thr-113–Leu-133 traverse the membrane as a helical segment. Topologically, residues Gln-134–Thr-170 are extracellular. Residues Ile-171–Ile-191 form a helical membrane-spanning segment. Over Phe-192–Gln-205 the chain is Cytoplasmic.

Belongs to the connexin family. Beta-type (group I) subfamily. As to quaternary structure, a connexon is composed of a hexamer of connexins. In terms of tissue distribution, not detected in lens or retina.

The protein localises to the cell membrane. Functionally, mediates calcium-independent ATP release, suggesting activity as a hemichannel. Does not form functional gap junctions. The protein is Gap junction epsilon-1 protein (GJE1) of Homo sapiens (Human).